A 937-amino-acid chain; its full sequence is ABC transporter A family member 4 (937 aa).

The next 7 membrane-spanning stretches (helical) occupy residues leucine 34–threonine 54, isoleucine 340–isoleucine 360, phenylalanine 394–leucine 414, serine 423–valine 443, valine 455–methionine 475, glycine 478–tyrosine 498, and alanine 528–tyrosine 548. An ABC transporter domain is found at aspartate 618–threonine 852. Glycine 653–threonine 660 contacts ATP.

This sequence belongs to the ABC transporter superfamily. ABCA family. CPR flippase (TC 3.A.1.211) subfamily.

The protein localises to the membrane. The protein is ABC transporter A family member 4 (ABCA4) of Arabidopsis thaliana (Mouse-ear cress).